The sequence spans 455 residues: Chromosomal replication initiator protein DnaA (455 aa).

The domain I, interacts with DnaA modulators stretch occupies residues 1-74 (MSEQEIWEKV…LYEAIGHEIA (74 aa)). Residues 74–116 (APVFYTEEELKSLHTSEQKEENQPEQPAKKYTPGVDEAVIGGE) form a domain II region. The span at 85–95 (SLHTSEQKEEN) shows a compositional bias: basic and acidic residues. The segment at 85 to 104 (SLHTSEQKEENQPEQPAKKY) is disordered. A domain III, AAA+ region region spans residues 117–333 (QFNTHNTFET…GALTRVLAFS (217 aa)). ATP contacts are provided by Gly161, Gly163, Lys164, and Thr165. The segment at 334–455 (KLQGQPITTE…ENLEKEIRNQ (122 aa)) is domain IV, binds dsDNA.

This sequence belongs to the DnaA family. Oligomerizes as a right-handed, spiral filament on DNA at oriC.

The protein resides in the cytoplasm. Functionally, plays an essential role in the initiation and regulation of chromosomal replication. ATP-DnaA binds to the origin of replication (oriC) to initiate formation of the DNA replication initiation complex once per cell cycle. Binds the DnaA box (a 9 base pair repeat at the origin) and separates the double-stranded (ds)DNA. Forms a right-handed helical filament on oriC DNA; dsDNA binds to the exterior of the filament while single-stranded (ss)DNA is stabiized in the filament's interior. The ATP-DnaA-oriC complex binds and stabilizes one strand of the AT-rich DNA unwinding element (DUE), permitting loading of DNA polymerase. After initiation quickly degrades to an ADP-DnaA complex that is not apt for DNA replication. Binds acidic phospholipids. This Staphylococcus saprophyticus subsp. saprophyticus (strain ATCC 15305 / DSM 20229 / NCIMB 8711 / NCTC 7292 / S-41) protein is Chromosomal replication initiator protein DnaA.